We begin with the raw amino-acid sequence, 298 residues long: Leucine-rich repeat-containing protein 55 (298 aa).

An N-terminal signal peptide occupies residues 1–34 (MGDTWAQLPWPGPPHSALLLVFFLLAAGVMHSDA). One can recognise an LRRNT domain in the interval 35 to 65 (GASCPVLCTCRNQVVDCSNQRLFSVPPDLPM). 2 disulfides stabilise this stretch: C38–C44 and C42–C51. LRR repeat units follow at residues 66–87 (DTRN…YLTC), 90–111 (ELRV…LFLH), 114–135 (RLAH…MFRE), 138–160 (GLVH…AFQG), and 163–186 (HLRD…EGLP). The region spanning 196–251 (NPWVCGCTMEPLLKWLRNRIQRCTADSQLAECRGPPEVEGAPLFSLTEESFKACHL) is the LRRCT domain. 2 disulfides stabilise this stretch: C200/C227 and C202/C249. The helical transmembrane segment at 259-279 (LFIAFVGFVVSIASVATNFLL) threads the bilayer.

Interacts with KCNMA1.

It is found in the cell membrane. Functionally, auxiliary protein of the large-conductance, voltage and calcium-activated potassium channel (BK alpha). Modulates gating properties by producing a marked shift in the BK channel's voltage dependence of activation in the hyperpolarizing direction, and in the absence of calcium. This chain is Leucine-rich repeat-containing protein 55 (Lrrc55), found in Rattus norvegicus (Rat).